Here is a 166-residue protein sequence, read N- to C-terminus: Large ribosomal subunit protein uL10 (166 aa).

It belongs to the universal ribosomal protein uL10 family. In terms of assembly, part of the ribosomal stalk of the 50S ribosomal subunit. The N-terminus interacts with L11 and the large rRNA to form the base of the stalk. The C-terminus forms an elongated spine to which L12 dimers bind in a sequential fashion forming a multimeric L10(L12)X complex.

Functionally, forms part of the ribosomal stalk, playing a central role in the interaction of the ribosome with GTP-bound translation factors. The polypeptide is Large ribosomal subunit protein uL10 (Pseudomonas putida (strain W619)).